Here is a 92-residue protein sequence, read N- to C-terminus: MTRSLKKNPFVANHLLKKIDKLNTKAEKEIIVTWSRASTIIPTMIGHTIGIHNGKEHLPIYITDRMVGHKLGEFAPTLNFRGHAKSDNRSRR.

The protein belongs to the universal ribosomal protein uS19 family.

It is found in the plastid. The protein localises to the chloroplast. Its function is as follows. Protein S19 forms a complex with S13 that binds strongly to the 16S ribosomal RNA. The protein is Small ribosomal subunit protein uS19c of Coffea arabica (Arabian coffee).